Here is a 256-residue protein sequence, read N- to C-terminus: uncharacterized protein (256 aa).

This is an uncharacterized protein from Bacillus subtilis (strain 168).